Consider the following 373-residue polypeptide: Erythronate-4-phosphate dehydrogenase (373 aa).

The substrate site is built by Ser-45 and Thr-66. Positions 146 and 175 each coordinate NAD(+). The active site involves Arg-208. Position 232 (Asp-232) interacts with NAD(+). Glu-237 is a catalytic residue. His-254 functions as the Proton donor in the catalytic mechanism. Residue Gly-257 coordinates NAD(+). Tyr-258 serves as a coordination point for substrate.

It belongs to the D-isomer specific 2-hydroxyacid dehydrogenase family. PdxB subfamily. In terms of assembly, homodimer.

Its subcellular location is the cytoplasm. It carries out the reaction 4-phospho-D-erythronate + NAD(+) = (R)-3-hydroxy-2-oxo-4-phosphooxybutanoate + NADH + H(+). Its pathway is cofactor biosynthesis; pyridoxine 5'-phosphate biosynthesis; pyridoxine 5'-phosphate from D-erythrose 4-phosphate: step 2/5. In terms of biological role, catalyzes the oxidation of erythronate-4-phosphate to 3-hydroxy-2-oxo-4-phosphonooxybutanoate. This Serratia proteamaculans (strain 568) protein is Erythronate-4-phosphate dehydrogenase.